The sequence spans 481 residues: MHSILFATSEAYPLIKTGGLADVAASLPRALLKLGHDVRILLPAYESLLAKAASQGLKTLGEISLDDINLTLHQTRLPGTRVTVWLVDIPEFSARAGNPYCGADGNDWYDNHLRFYWFARAAEAIALNQAGLNWQPDIVHCNDWQTGLIPALLSLHPERPATLFTIHNLAYRGLFSYQAFGELNLPPAFWHHERLEFYGQMSFMKGGLAFADFITTVSPSYAQEIQLPEHGYGLDGLIRYRQESLSGILNGIDTDEWNPGKDKHLAATYNRRTLGNKTKNKLALQETLGLALNADVPLLGFIGRLVDQKGIDLILNQLPLLLEQDCQLVVLGSGFPHYEQRLREVARQYPDRVSVTIGYDEGLAHQIEAGCDIFLMPSIFEPCGLNQMYSLRYGTLPVVHAVGGLKDTVQERPLDNPGEDANGFVFHSPDALDLHAAILRALDAYRQPATWKQLQINAMNRDSSWEQSAKAYEAIYANLCS.

Residue K16 coordinates ADP-alpha-D-glucose.

Belongs to the glycosyltransferase 1 family. Bacterial/plant glycogen synthase subfamily.

It carries out the reaction [(1-&gt;4)-alpha-D-glucosyl](n) + ADP-alpha-D-glucose = [(1-&gt;4)-alpha-D-glucosyl](n+1) + ADP + H(+). The protein operates within glycan biosynthesis; glycogen biosynthesis. Synthesizes alpha-1,4-glucan chains using ADP-glucose. This is Glycogen synthase from Cellvibrio japonicus (strain Ueda107) (Pseudomonas fluorescens subsp. cellulosa).